The following is a 94-amino-acid chain: Large ribosomal subunit protein uL23 (94 aa).

It belongs to the universal ribosomal protein uL23 family. In terms of assembly, part of the 50S ribosomal subunit. Contacts protein L29, and trigger factor when it is bound to the ribosome.

One of the early assembly proteins it binds 23S rRNA. One of the proteins that surrounds the polypeptide exit tunnel on the outside of the ribosome. Forms the main docking site for trigger factor binding to the ribosome. This chain is Large ribosomal subunit protein uL23, found in Mycoplasma mycoides subsp. mycoides SC (strain CCUG 32753 / NCTC 10114 / PG1).